The following is a 243-amino-acid chain: PF03932 family protein CutC (243 aa).

It belongs to the CutC family.

Its subcellular location is the cytoplasm. This Histophilus somni (strain 2336) (Haemophilus somnus) protein is PF03932 family protein CutC.